Consider the following 474-residue polypeptide: tRNA-2-methylthio-N(6)-dimethylallyladenosine synthase (474 aa).

In terms of domain architecture, MTTase N-terminal spans 3–120 (KKLHIKTWGC…LPEMIEQVRR (118 aa)). [4Fe-4S] cluster contacts are provided by Cys12, Cys49, Cys83, Cys157, Cys161, and Cys164. In terms of domain architecture, Radical SAM core spans 143-375 (RAEGPTAFVS…QDRITQQAMR (233 aa)). Residues 378–441 (RHMMGTVQRI…TNSLRGKFIR (64 aa)) enclose the TRAM domain.

Belongs to the methylthiotransferase family. MiaB subfamily. As to quaternary structure, monomer. It depends on [4Fe-4S] cluster as a cofactor.

Its subcellular location is the cytoplasm. It carries out the reaction N(6)-dimethylallyladenosine(37) in tRNA + (sulfur carrier)-SH + AH2 + 2 S-adenosyl-L-methionine = 2-methylsulfanyl-N(6)-dimethylallyladenosine(37) in tRNA + (sulfur carrier)-H + 5'-deoxyadenosine + L-methionine + A + S-adenosyl-L-homocysteine + 2 H(+). In terms of biological role, catalyzes the methylthiolation of N6-(dimethylallyl)adenosine (i(6)A), leading to the formation of 2-methylthio-N6-(dimethylallyl)adenosine (ms(2)i(6)A) at position 37 in tRNAs that read codons beginning with uridine. The protein is tRNA-2-methylthio-N(6)-dimethylallyladenosine synthase of Shewanella oneidensis (strain ATCC 700550 / JCM 31522 / CIP 106686 / LMG 19005 / NCIMB 14063 / MR-1).